A 246-amino-acid polypeptide reads, in one-letter code: TVP38/TMEM64 family membrane protein MT0653 (246 aa).

The next 5 membrane-spanning stretches (helical) occupy residues 19–39, 57–77, 83–103, 157–177, and 196–216; these read LVVFAGFLVGMFYLVAATDVI, LTYVVVSAVLGALFVPGPILA, LFGPLVGVFVTLGATVGTAVV, AFGTFGVPLWQMAVGAFIGSA, and LLASCAIAVWCVTAIIGAFAA.

The protein belongs to the TVP38/TMEM64 family.

It localises to the cell membrane. In Mycobacterium tuberculosis (strain CDC 1551 / Oshkosh), this protein is TVP38/TMEM64 family membrane protein MT0653.